A 239-amino-acid chain; its full sequence is Uridylate kinase (239 aa).

An ATP-binding site is contributed by lysine 10–glycine 13. Glycine 53 lines the UMP pocket. The ATP site is built by glycine 54 and arginine 58. UMP-binding positions include aspartate 73 and threonine 135 to threonine 142. Asparagine 163, tyrosine 169, and aspartate 172 together coordinate ATP.

This sequence belongs to the UMP kinase family. As to quaternary structure, homohexamer.

It is found in the cytoplasm. It catalyses the reaction UMP + ATP = UDP + ADP. It participates in pyrimidine metabolism; CTP biosynthesis via de novo pathway; UDP from UMP (UMPK route): step 1/1. Inhibited by UTP. Its function is as follows. Catalyzes the reversible phosphorylation of UMP to UDP. This Mycoplasmopsis synoviae (strain 53) (Mycoplasma synoviae) protein is Uridylate kinase.